Reading from the N-terminus, the 103-residue chain is Large ribosomal subunit protein bL21 (103 aa).

It belongs to the bacterial ribosomal protein bL21 family. In terms of assembly, part of the 50S ribosomal subunit. Contacts protein L20.

Functionally, this protein binds to 23S rRNA in the presence of protein L20. This is Large ribosomal subunit protein bL21 from Acinetobacter baylyi (strain ATCC 33305 / BD413 / ADP1).